Here is a 565-residue protein sequence, read N- to C-terminus: Periplasmic trehalase (565 aa).

Positions 1 to 30 (MKSPAPSRPQKMALIPACIFLCFAALSVQA) are cleaved as a signal peptide. Substrate is bound by residues Arg-152, 159–160 (WD), Asn-196, 205–207 (RSQ), 277–279 (RPE), and Gly-310. Residues Asp-312 and Glu-496 each act as proton donor/acceptor in the active site. Residue Glu-511 participates in substrate binding. The segment at 538–565 (PCDNVPATRPTVKSATTQPSTKEAQPTP) is disordered. The span at 548–565 (TVKSATTQPSTKEAQPTP) shows a compositional bias: polar residues.

This sequence belongs to the glycosyl hydrolase 37 family. In terms of assembly, monomer.

The protein localises to the periplasm. The catalysed reaction is alpha,alpha-trehalose + H2O = alpha-D-glucose + beta-D-glucose. In terms of biological role, provides the cells with the ability to utilize trehalose at high osmolarity by splitting it into glucose molecules that can subsequently be taken up by the phosphotransferase-mediated uptake system. This is Periplasmic trehalase from Escherichia coli (strain K12 / MC4100 / BW2952).